A 290-amino-acid chain; its full sequence is 33 kDa chaperonin (290 aa).

Intrachain disulfides connect C235-C237 and C268-C271.

It belongs to the HSP33 family. Post-translationally, under oxidizing conditions two disulfide bonds are formed involving the reactive cysteines. Under reducing conditions zinc is bound to the reactive cysteines and the protein is inactive.

Its subcellular location is the cytoplasm. Its function is as follows. Redox regulated molecular chaperone. Protects both thermally unfolding and oxidatively damaged proteins from irreversible aggregation. Plays an important role in the bacterial defense system toward oxidative stress. This is 33 kDa chaperonin from Streptococcus pyogenes serotype M3 (strain ATCC BAA-595 / MGAS315).